The chain runs to 929 residues: ATP-dependent RNA helicase DDX42 (929 aa).

Position 5 is an N6-acetyllysine (Lys5). The residue at position 12 (Arg12) is an Omega-N-methylarginine. Disordered stretches follow at residues 25–119 (KKEE…LEAF) and 182–203 (EYDS…LPPI). Low complexity predominate over residues 35–52 (SHSAFGAASSSSGFGKSA). Residue Ser58 is modified to Phosphoserine. The segment covering 70–84 (DEENAYFEDEEEDSS) has biased composition (acidic residues). Phosphoserine occurs at positions 96, 104, 109, and 111. Positions 116–157 (LEAFMAEVEDQAARDMKRLEEKDKERKNVKGIRDDIEEEDDQ) form a coiled coil. Ser185 carries the phosphoserine modification. The Q motif signature appears at 253–281 (SSFAHFGFDEQLMHQIRKSEYTQPTPIQC). Residues 284 to 459 (VPVALSGRDM…RDILIDPIRV (176 aa)) enclose the Helicase ATP-binding domain. 297–304 (AKTGSGKT) lines the ATP pocket. The DEAD box signature appears at 407 to 410 (DEAD). Positions 487–632 (WLTRRLVEFT…HVSKELLDLA (146 aa)) constitute a Helicase C-terminal domain. Disordered stretches follow at residues 662–682 (ERPG…VMSN) and 723–929 (GTSS…RWDS). A compositionally biased stretch (low complexity) spans 723–737 (GTSSAGASGWTSAGS). Composition is skewed to polar residues over residues 738-777 (LNSV…SSAP) and 787-798 (GVNNTASGNNSR). The segment at 739–828 (NSVPTNSAQQ…RHSHGDGGNR (90 aa)) is necessary for interaction with TP53BP2. Basic and acidic residues predominate over residues 821 to 911 (SHGDGGNRHG…KVDSKTDKTP (91 aa)). A Glycyl lysine isopeptide (Lys-Gly) (interchain with G-Cter in SUMO2) cross-link involves residue Lys894.

This sequence belongs to the DEAD box helicase family. DDX42 subfamily. In terms of assembly, transient component of the SF3B subcomplex of the 17S U2 SnRNP complex. Interacts (via the C-terminus) with TP53BP2; the interaction is not inhibitied by TP53BP2 ubiquitination and is independent of p53/TP53.

It is found in the cytoplasm. Its subcellular location is the nucleus. It catalyses the reaction ATP + H2O = ADP + phosphate + H(+). ATP-dependent RNA helicase that binds to partially double-stranded RNAs (dsRNAs) in order to unwind RNA secondary structures. Unwinding is promoted in the presence of single-strand binding proteins. Also mediates RNA duplex formation thereby displacing the single-strand RNA binding protein. ATP and ADP modulate its activity: ATP binding and hydrolysis by DDX42 triggers RNA strand separation, whereas the ADP-bound form of the protein triggers annealing of complementary RNA strands. Required for assembly of the 17S U2 SnRNP complex of the spliceosome, a large ribonucleoprotein complex that removes introns from transcribed pre-mRNAs: DDX42 associates transiently with the SF3B subcomplex of the 17S U2 SnRNP complex and is released after fulfilling its role in the assembly of 17S U2 SnRNP. Involved in the survival of cells by interacting with TP53BP2 and thereby counteracting the apoptosis-stimulating activity of TP53BP2. Relocalizes TP53BP2 to the cytoplasm. This Mus musculus (Mouse) protein is ATP-dependent RNA helicase DDX42 (Ddx42).